The primary structure comprises 643 residues: Threonine--tRNA ligase (643 aa).

In terms of domain architecture, TGS spans 1 to 62 (MSFSVTLPDG…DEDVEAAIIT (62 aa)). Positions 239-537 (DHRTIGRDLD…LTEIYKGAFP (299 aa)) are catalytic. Zn(2+)-binding residues include Cys-333, His-384, and His-514.

This sequence belongs to the class-II aminoacyl-tRNA synthetase family. In terms of assembly, homodimer. Zn(2+) is required as a cofactor.

Its subcellular location is the cytoplasm. It catalyses the reaction tRNA(Thr) + L-threonine + ATP = L-threonyl-tRNA(Thr) + AMP + diphosphate + H(+). Functionally, catalyzes the attachment of threonine to tRNA(Thr) in a two-step reaction: L-threonine is first activated by ATP to form Thr-AMP and then transferred to the acceptor end of tRNA(Thr). Also edits incorrectly charged L-seryl-tRNA(Thr). The protein is Threonine--tRNA ligase of Lactobacillus gasseri (strain ATCC 33323 / DSM 20243 / BCRC 14619 / CIP 102991 / JCM 1131 / KCTC 3163 / NCIMB 11718 / NCTC 13722 / AM63).